We begin with the raw amino-acid sequence, 75 residues long: Large ribosomal subunit protein bL31 (75 aa).

The protein belongs to the bacterial ribosomal protein bL31 family. Type A subfamily. As to quaternary structure, part of the 50S ribosomal subunit.

Functionally, binds the 23S rRNA. The polypeptide is Large ribosomal subunit protein bL31 (Acidiphilium cryptum (strain JF-5)).